We begin with the raw amino-acid sequence, 305 residues long: Mitochondrial brown fat uncoupling protein 1 (305 aa).

Over 1 to 10 (MVGHAATDVP) the chain is Mitochondrial intermembrane. The chain crosses the membrane as a helical span at residues 11–32 (PTMAVKIFSAGVAACVADIITF). Solcar repeat units follow at residues 11 to 102 (PTMA…VQEF), 109 to 199 (ASLG…MKEA), and 208 to 293 (DDVP…LKRE). Over 33-73 (PLDTAKVRLQIQGECLTSSAFRYKGVLGTIITLAKTEGPVK) the chain is Mitochondrial matrix. Position 56 (Lys56) interacts with fatty acid 16:0. Residues 74–96 (LYSGLPAGLQRQISFASLRIGLY) form a helical membrane-spanning segment. Over 97-114 (DTVQEFFTTGKEASLGSK) the chain is Mitochondrial intermembrane. The chain crosses the membrane as a helical span at residues 115 to 131 (ISAGLTTGGVAVFIGQP). At 132–176 (TEVVKVRLQAQSHLHGPKPRYTGTYNAYRIIATTEGLTGLWKGTT) the chain is on the mitochondrial matrix side. The helical transmembrane segment at 177–193 (PNLTRNVIINCTELVTY) threads the bilayer. The Mitochondrial intermembrane segment spans residues 194 to 210 (DLMKEALVKNKLLADDV). Residues 211-230 (PCHFVSAVVAGFCTTVLSSP) traverse the membrane as a helical segment. Over 231 to 264 (VDVVKTRFVNSSPGQYTSVPNCAMMMLTREGPSA) the chain is Mitochondrial matrix. Cys252 is modified (cysteine sulfenic acid (-SOH)). A helical transmembrane segment spans residues 265–287 (FFKGFVPSFLRLGSWNIIMFVCF). Lys267 contributes to the fatty acid 16:0 binding site. Residues 288-305 (EQLKRELMKSRQAMDCAT) lie on the Mitochondrial intermembrane side of the membrane.

This sequence belongs to the mitochondrial carrier (TC 2.A.29) family. As to quaternary structure, most probably functions as a monomer. Binds one purine nucleotide per monomer. However, has also been suggested to function as a homodimer or a homotetramer. Tightly associates with cardiolipin in the mitochondrion inner membrane; may stabilize and regulate its activity. May undergo sulfenylation upon cold exposure. May increase the sensitivity of UCP1 thermogenic function to the activation by noradrenaline probably through structural effects. In terms of processing, may undergo ubiquitin-mediated proteasomal degradation.

Its subcellular location is the mitochondrion inner membrane. The catalysed reaction is H(+)(in) = H(+)(out). Its activity is regulated as follows. Has no constitutive proton transporter activity and has to be activated by long-chain fatty acids/LCFAs. Inhibited by purine nucleotides. Both purine nucleotides and LCFAs bind the cytosolic side of the transporter and directly compete to activate or inhibit it. Activated by noradrenaline and reactive oxygen species. Despite lacking canonical translational encoding for selenocysteine, a small pool of the protein has been observed to selectively incorporate selenocysteine at 'Cys-252'. Selenocysteine-modified protein is highly sensitive to redox modification and may constitute a pool of protein highly sensitive to activation by elevated levels of reactive oxygen species (ROS). Its function is as follows. Mitochondrial protein responsible for thermogenic respiration, a specialized capacity of brown adipose tissue and beige fat that participates in non-shivering adaptive thermogenesis to temperature and diet variations and more generally to the regulation of energy balance. Functions as a long-chain fatty acid/LCFA and proton symporter, simultaneously transporting one LCFA and one proton through the inner mitochondrial membrane. However, LCFAs remaining associated with the transporter via their hydrophobic tails, it results in an apparent transport of protons activated by LCFAs. Thereby, dissipates the mitochondrial proton gradient and converts the energy of substrate oxydation into heat instead of ATP. Regulates the production of reactive oxygen species/ROS by mitochondria. This Ovis aries (Sheep) protein is Mitochondrial brown fat uncoupling protein 1.